The chain runs to 601 residues: Glutathione-regulated potassium-efflux system protein KefB (601 aa).

13 helical membrane passes run 4–24 (SDFLLAGVLFLFAAVAAVPLA), 29–49 (IGAVLGYLLAGIAIGPWGLGF), 55–75 (EILHFSELGVVFLMFIIGLEL), 87–107 (IFGVGAAQVLLSAALLAGLLM), 115–135 (AAVVGGIGLAMSSTAMALQLM), 152–172 (VLLFQDLAVIPALALVPLLAG), 177–197 (HFDWMKIGMKVLAFVGMLIGG), 207–227 (FIAASGVREVFTAATLLLVLG), 230–250 (LFMDALGLSMALGTFIAGVLL), 268–288 (GLLLGLFFISVGMSLNLGVLY), 291–311 (LLWVVISVVVLVAVKILVLYL), 324–344 (MQFAGVLSQGGEFAFVLFSTA), and 356–376 (ALLLVTVTLSMMTTPLLMKLV). The RCK N-terminal domain occupies 400–519 (KPQVIVVGFG…AGVTQFSRET (120 aa)).

The protein belongs to the monovalent cation:proton antiporter 2 (CPA2) transporter (TC 2.A.37) family. KefB subfamily. In terms of assembly, interacts with the regulatory subunit KefG.

The protein localises to the cell inner membrane. Functionally, pore-forming subunit of a potassium efflux system that confers protection against electrophiles. Catalyzes K(+)/H(+) antiport. In Escherichia coli O139:H28 (strain E24377A / ETEC), this protein is Glutathione-regulated potassium-efflux system protein KefB.